The chain runs to 1273 residues: ABC transporter B family member 2 (1273 aa).

The N-terminal stretch at 1–30 is a signal peptide; that stretch reads MYISLIFFLSNHFPPLISIPIFIFLSFSSP. Helical transmembrane passes span 66-86, 91-111, 126-146, 209-229, 230-250, 305-325, and 345-365; these read FSFA…GACI, VPIF…AYLF, FVYL…CWMH, FIAG…VTLS, IVPL…GLIA, GLGL…LVWF, and LNVV…SAFV. One can recognise an ABC transmembrane type-1 1 domain in the interval 77 to 366; that stretch reads MTLGSVGACI…AAPDISAFVR (290 aa). The ABC transporter 1 domain maps to 401–637; the sequence is IQFKDATFSY…PDGAYSSLLR (237 aa). Residue 436 to 443 coordinates ATP; it reads GGSGSGKS. 2 N-linked (GlcNAc...) asparagine glycosylation sites follow: Asn466 and Asn651. The ABC transmembrane type-1 2 domain occupies 710–997; sequence GVCGTICAFI…TLALAPDLLK (288 aa). 2 helical membrane passes run 711–731 and 752–772; these read VCGT…ALGV and IAIL…IEHI. An N-linked (GlcNAc...) asparagine glycan is attached at Asn806. Helical transmembrane passes span 832 to 852, 934 to 954, and 975 to 995; these read ILLQ…ILNW, IAGL…GLAL, and FMVL…APDL. In terms of domain architecture, ABC transporter 2 spans 1030-1266; the sequence is IELKGVHFSY…KSGPYFKLIS (237 aa). 1065 to 1072 lines the ATP pocket; that stretch reads GQSGSGKS. Residues Asn1217 and Asn1256 are each glycosylated (N-linked (GlcNAc...) asparagine).

It belongs to the ABC transporter superfamily. ABCB family. Multidrug resistance exporter (TC 3.A.1.201) subfamily. In terms of assembly, interacts with 1-naphthylphthalamic acid (NPA).

The protein resides in the membrane. The chain is ABC transporter B family member 2 (ABCB2) from Arabidopsis thaliana (Mouse-ear cress).